The primary structure comprises 132 residues: ATP synthase epsilon chain, cyanelle (132 aa).

It belongs to the ATPase epsilon chain family. In terms of assembly, F-type ATPases have 2 components, CF(1) - the catalytic core - and CF(0) - the membrane proton channel. CF(1) has five subunits: alpha(3), beta(3), gamma(1), delta(1), epsilon(1). CF(0) has three main subunits: a, b and c.

Its subcellular location is the plastid. It localises to the cyanelle thylakoid membrane. Functionally, produces ATP from ADP in the presence of a proton gradient across the membrane. In Cyanophora paradoxa, this protein is ATP synthase epsilon chain, cyanelle.